Here is an 850-residue protein sequence, read N- to C-terminus: MWSNCIFLTLFTFYLFLGQSCCQTDTLLQGQYLKDGQELVSAFNIFKLKFFNFENSSNWYLGIWYNNFYLSGAVWIANRNNPVLGRSGSLTVDSLGRLRILRGASSLLELSSTETTGNTTLKLLDSGNLQLQEMDSDGSMKRTLWQSFDYPTDTLLPGMKLGFNVKTGKRWELTSWLGDTLPASGSFVFGMDDNITNRLTILWLGNVYWASGLWFKGGFSLEKLNTNGFIFSFVSTESEHYFMYSGDENYGGPLFPRIRIDQQGSLQKINLDGVKKHVHCSPSVFGEELEYGCYQQNFRNCVPARYKEVTGSWDCSPFGFGYTYTRKTYDLSYCSRFGYTFRETVSPSAENGFVFNEIGRRLSSYDCYVKCLQNCSCVAYASTNGDGTGCEIWNTDPTNENSASHHPRTIYIRIKGSKLAATWLVVVASLFLIIPVTWLIIYLVLRKFKIKGTNFVSESLKMISSQSCSLTNKRLSTLRVGSTIDQEMLLLELGIERRRRGKRSARNNNNELQIFSFESVAFATDYFSDANKLGEGGFGPVYKGRLIDGEEVAIKRLSLASGQGLVEFKNEAMLIAKLQHTNLVKLLGCCVEKDEKMLIYEYMPNKSLDYFLFDPLRKIVLDWKLRFRIMEGIIQGLLYLHKYSRLKVIHRDIKAGNILLDEDMNPKISDFGMARIFGAQESKANTKRVAGTFGYMSPEYFREGLFSAKSDVFSFGVLMLEIICGRKNNSFHHDSEGPLNLIVHVWNLFKENRVREVIDPSLGDSAVENPQVLRCVQVALLCVQQNADDRPSMLDVVSMIYGDGNNALSLPKEPAFYDGPPRSSPEMEVEPPEMENVSANRVTITVMEAR.

The first 22 residues, 1–22 (MWSNCIFLTLFTFYLFLGQSCC), serve as a signal peptide directing secretion. At 23–423 (QTDTLLQGQY…IKGSKLAATW (401 aa)) the chain is on the extracellular side. The region spanning 24–144 (TDTLLQGQYL…DSDGSMKRTL (121 aa)) is the Bulb-type lectin domain. Residues N55, N118, N194, and N374 are each glycosylated (N-linked (GlcNAc...) asparagine). The region spanning 334–416 (CSRFGYTFRE…PRTIYIRIKG (83 aa)) is the PAN domain. 2 disulfides stabilise this stretch: C367–C390 and C371–C377. The chain crosses the membrane as a helical span at residues 424-444 (LVVVASLFLIIPVTWLIIYLV). The Cytoplasmic portion of the chain corresponds to 445 to 850 (LRKFKIKGTN…RVTITVMEAR (406 aa)). One can recognise a Protein kinase domain in the interval 527–816 (FSDANKLGEG…ALSLPKEPAF (290 aa)). ATP is bound by residues 533-541 (LGEGGFGPV) and K555. The residue at position 561 (S561) is a Phosphoserine. The tract at residues 616 to 633 (LRKIVLDWKLRFRIMEGI) is caM-binding. The Proton acceptor role is filled by D652. Phosphoserine is present on S669. At T686 the chain carries Phosphothreonine. Phosphoserine is present on residues S730 and S838. T845 carries the phosphothreonine modification.

This sequence belongs to the protein kinase superfamily. Ser/Thr protein kinase family. In terms of tissue distribution, mostly expressed in leaves, and, to a lower extent, in roots and flowers.

Its subcellular location is the cell membrane. The catalysed reaction is L-seryl-[protein] + ATP = O-phospho-L-seryl-[protein] + ADP + H(+). It carries out the reaction L-threonyl-[protein] + ATP = O-phospho-L-threonyl-[protein] + ADP + H(+). Its function is as follows. Promotes the expression of genes involved in photosynthesis at least in dedifferentiated calli. The sequence is that of G-type lectin S-receptor-like serine/threonine-protein kinase CES101 (CES101) from Arabidopsis thaliana (Mouse-ear cress).